The chain runs to 75 residues: Cruzioseptin-8 (75 aa).

The first 22 residues, 1 to 22 (MAFLKKCLFLVLFLGLVSLSIC), serve as a signal peptide directing secretion. Positions 23-43 (EEEKREEENEEVQEDDDQSEE) are excised as a propeptide. The disordered stretch occupies residues 25–44 (EKREEENEEVQEDDDQSEEK). Positions 30–41 (ENEEVQEDDDQS) are enriched in acidic residues. Glutamine amide is present on Gln72. The propeptide occupies 74–75 (EQ).

In terms of tissue distribution, expressed by the skin glands.

The protein resides in the secreted. In terms of biological role, has antimicrobial activity. The sequence is that of Cruzioseptin-8 from Cruziohyla calcarifer (Splendid leaf frog).